A 181-amino-acid chain; its full sequence is Translation initiation factor IF-3 (181 aa).

This sequence belongs to the IF-3 family. Monomer.

It localises to the cytoplasm. In terms of biological role, IF-3 binds to the 30S ribosomal subunit and shifts the equilibrium between 70S ribosomes and their 50S and 30S subunits in favor of the free subunits, thus enhancing the availability of 30S subunits on which protein synthesis initiation begins. The polypeptide is Translation initiation factor IF-3 (Idiomarina loihiensis (strain ATCC BAA-735 / DSM 15497 / L2-TR)).